The following is an 882-amino-acid chain: Valine--tRNA ligase (882 aa).

Positions 45 to 55 (PNVTGSLHIGH) match the 'HIGH' region motif. The 'KMSKS' region motif lies at 525-529 (KFSKS). Lys528 is an ATP binding site. A coiled-coil region spans residues 812–881 (EGLIDVAKEK…VLKKGIQNLA (70 aa)).

It belongs to the class-I aminoacyl-tRNA synthetase family. ValS type 1 subfamily. In terms of assembly, monomer.

It localises to the cytoplasm. The enzyme catalyses tRNA(Val) + L-valine + ATP = L-valyl-tRNA(Val) + AMP + diphosphate. Its function is as follows. Catalyzes the attachment of valine to tRNA(Val). As ValRS can inadvertently accommodate and process structurally similar amino acids such as threonine, to avoid such errors, it has a 'posttransfer' editing activity that hydrolyzes mischarged Thr-tRNA(Val) in a tRNA-dependent manner. This chain is Valine--tRNA ligase, found in Leptospira interrogans serogroup Icterohaemorrhagiae serovar Lai (strain 56601).